A 206-amino-acid polypeptide reads, in one-letter code: uncharacterized protein (206 aa).

The helical transmembrane segment at 4–24 (LLVVIAVALFIAAIVVLVVAI) threads the bilayer.

The protein localises to the membrane. This is an uncharacterized protein from Mycobacterium tuberculosis (strain CDC 1551 / Oshkosh).